A 412-amino-acid chain; its full sequence is Lysosomal phospholipase A and acyltransferase (412 aa).

The first 33 residues, 1–33, serve as a signal peptide directing secretion; it reads MGLHLRPYRVGLLPDGLLFLLLLLMLLADPALP. Asp-46 lines the substrate pocket. Cys-65 and Cys-89 are disulfide-bonded. N-linked (GlcNAc...) asparagine glycosylation occurs at Asn-99. The active-site Acyl-ester intermediate is the Ser-198. Ser-198 is a binding site for Zn(2+). Met-199 serves as a coordination point for substrate. Residues Asn-273 and Asn-289 are each glycosylated (N-linked (GlcNAc...) asparagine). Zn(2+) is bound by residues Asp-340 and Cys-355. Catalysis depends on charge relay system residues Asp-360 and His-392. His-392 contacts Zn(2+). Asn-398 carries N-linked (GlcNAc...) asparagine glycosylation.

The protein belongs to the AB hydrolase superfamily. Lipase family. Post-translationally, N-glycosylated. N-glycosylation is important for maturation of the enzyme and normal subcellular location. As to expression, detected in blood plasma (at protein level). Ubiquitous. Highly expressed in heart, placenta, skeletal muscle, kidney and pancreas. Detected at lower levels in spleen, thymus, prostate, testis, ovary, small intestine, colon and peripheral blood leukocytes.

The protein localises to the lysosome. It localises to the secreted. Its subcellular location is the membrane. It carries out the reaction a 1,2-diacyl-sn-glycero-3-phosphocholine + H2O = a 2-acyl-sn-glycero-3-phosphocholine + a fatty acid + H(+). The catalysed reaction is 1-hexadecanoyl-2-(9Z-octadecenoyl)-sn-glycero-3-phosphocholine + H2O = 2-(9Z-octadecenoyl)-sn-glycero-3-phosphocholine + hexadecanoate + H(+). The enzyme catalyses 1-hexadecanoyl-2-glutaroyl-sn-glycero-3-phosphocholine + H2O = 2-glutaroyl-sn-glycero-3-phosphocholine + hexadecanoate + H(+). It catalyses the reaction 1-hexadecanoyl-2-nonadioyl-sn-glycero-3-phosphocholine + H2O = 2-nonadioyl-sn-glycero-3-phosphocholine + hexadecanoate + H(+). It carries out the reaction 1-hexadecanoyl-2-(5-oxopentanoyl)-sn-glycero-3-phosphocholine + H2O = 2-(5-oxopentanoyl)-sn-glycero-3-phosphocholine + hexadecanoate + H(+). The catalysed reaction is 1-hexadecanoyl-2-(9-oxononanoyl)-sn-glycero-3-phosphocholine + H2O = 2-(9-oxononanoyl)-sn-glycero-3-phosphocholine + hexadecanoate + H(+). The enzyme catalyses 1,2-dihexadecanoyl-sn-glycero-3-phosphocholine + H2O = 2-hexadecanoyl-sn-glycero-3-phosphocholine + hexadecanoate + H(+). It catalyses the reaction a 1,2-diacyl-sn-glycero-3-phosphocholine + H2O = a 1-acyl-sn-glycero-3-phosphocholine + a fatty acid + H(+). It carries out the reaction 1,2-di-(9Z-octadecenoyl)-sn-glycero-3-phosphocholine + H2O = 1-(9Z-octadecenoyl)-sn-glycero-3-phosphocholine + (9Z)-octadecenoate + H(+). The catalysed reaction is 1-hexadecanoyl-2-(9Z-octadecenoyl)-sn-glycero-3-phosphocholine + H2O = 1-hexadecanoyl-sn-glycero-3-phosphocholine + (9Z)-octadecenoate + H(+). The enzyme catalyses 1,2-dihexadecanoyl-sn-glycero-3-phosphocholine + H2O = 1-hexadecanoyl-sn-glycero-3-phosphocholine + hexadecanoate + H(+). It catalyses the reaction a 1-acyl-sn-glycero-3-phosphocholine + H2O = sn-glycerol 3-phosphocholine + a fatty acid + H(+). It carries out the reaction 1-hexadecanoyl-sn-glycero-3-phosphocholine + H2O = sn-glycerol 3-phosphocholine + hexadecanoate + H(+). The catalysed reaction is N-(acetyl)-sphing-4-enine + a 1,2-diacyl-sn-glycero-3-phosphoethanolamine = 1-O-acyl-N-(acetyl)-sphing-4-enine + a 2-acyl-sn-glycero-3-phosphoethanolamine. The enzyme catalyses 1-hexadecanoyl-2-(9Z-octadecenoyl)-sn-glycero-3-phosphoethanolamine + N-(acetyl)-sphing-4-enine = 2-(9Z-octadecenoyl)-sn-glycero-3-phosphoethanolamine + 1-hexadecanoyl-N-(acetyl)-sphing-4-enine. It catalyses the reaction 1-hexadecanoyl-2-(9Z,12Z-octadecadienoyl)-sn-glycero-3-phosphoethanolamine + N-(acetyl)-sphing-4-enine = 2-(9Z,12Z)-octadecadienoyl-sn-glycero-3-phosphoethanolamine + 1-hexadecanoyl-N-(acetyl)-sphing-4-enine. It carries out the reaction 1-hexadecanoyl-2-(5Z,8Z,11Z,14Z-eicosatetraenoyl)-sn-glycero-3-phosphoethanolamine + N-(acetyl)-sphing-4-enine = 2-(5Z,8Z,11Z,14Z)-eicosatetraenoyl-sn-glycero-3-phosphoethanolamine + 1-hexadecanoyl-N-(acetyl)-sphing-4-enine. The catalysed reaction is N-(acetyl)-sphing-4-enine + a 1,2-diacyl-sn-glycero-3-phosphoethanolamine = 1-O-acyl-N-(acetyl)-sphing-4-enine + a 1-acyl-sn-glycero-3-phosphoethanolamine. The enzyme catalyses 1-hexadecanoyl-2-(9Z-octadecenoyl)-sn-glycero-3-phosphoethanolamine + N-(acetyl)-sphing-4-enine = 1-(9Z-octadecenoyl)-N-(acetyl)-sphing-4-enine + 1-hexadecanoyl-sn-glycero-3-phosphoethanolamine. It catalyses the reaction 1-hexadecanoyl-2-(9Z,12Z-octadecadienoyl)-sn-glycero-3-phosphoethanolamine + N-(acetyl)-sphing-4-enine = 1-(9Z,12Z-octadecadienoyl)-N-acetylsphing-4-enine + 1-hexadecanoyl-sn-glycero-3-phosphoethanolamine. It carries out the reaction 1-hexadecanoyl-2-(5Z,8Z,11Z,14Z-eicosatetraenoyl)-sn-glycero-3-phosphoethanolamine + N-(acetyl)-sphing-4-enine = 1-(5Z,8Z,11Z,14Z)-eicosatetraenoyl-N-(acetyl)-sphing-4-enine + 1-hexadecanoyl-sn-glycero-3-phosphoethanolamine. The catalysed reaction is N-(acetyl)-sphing-4-enine + a 1,2-diacyl-sn-glycero-3-phosphocholine = 1-O-acyl-N-(acetyl)-sphing-4-enine + a 1-acyl-sn-glycero-3-phosphocholine. The enzyme catalyses 1-hexadecanoyl-2-(9Z-octadecenoyl)-sn-glycero-3-phosphocholine + N-(acetyl)-sphing-4-enine = 1-(9Z-octadecenoyl)-N-(acetyl)-sphing-4-enine + 1-hexadecanoyl-sn-glycero-3-phosphocholine. It catalyses the reaction 1-hexadecanoyl-2-(9Z,12Z-octadecadienoyl)-sn-glycero-3-phosphocholine + N-(acetyl)-sphing-4-enine = 1-(9Z,12Z-octadecadienoyl)-N-acetylsphing-4-enine + 1-hexadecanoyl-sn-glycero-3-phosphocholine. It carries out the reaction 1-hexadecanoyl-2-(5Z,8Z,11Z,14Z-eicosatetraenoyl)-sn-glycero-3-phosphocholine + N-(acetyl)-sphing-4-enine = 1-(5Z,8Z,11Z,14Z)-eicosatetraenoyl-N-(acetyl)-sphing-4-enine + 1-hexadecanoyl-sn-glycero-3-phosphocholine. The catalysed reaction is 1-hexadecanoyl-2-(4Z,7Z,10Z,13Z,16Z,19Z-docosahexaenoyl)-sn-glycero-3-phosphocholine + N-(acetyl)-sphing-4-enine = 1-(4Z,7Z,10Z,13Z,16Z,19Z-docosahexaenoyl)-N-(acetyl)-sphing-4-enine + 1-hexadecanoyl-sn-glycero-3-phosphocholine. The enzyme catalyses 1-octadecanoyl-2-(9Z-octadecenoyl)-sn-glycero-3-phosphocholine + N-(acetyl)-sphing-4-enine = 1-(9Z-octadecenoyl)-N-(acetyl)-sphing-4-enine + 1-octadecanoyl-sn-glycero-3-phosphocholine. It catalyses the reaction 1-octadecanoyl-2-(9Z,12Z)-octadecadienoyl-sn-glycero-3-phosphocholine + N-(acetyl)-sphing-4-enine = 1-(9Z,12Z-octadecadienoyl)-N-acetylsphing-4-enine + 1-octadecanoyl-sn-glycero-3-phosphocholine. It carries out the reaction 1-octadecanoyl-2-(5Z,8Z,11Z,14Z-eicosatetraenoyl)-sn-glycero-3-phosphocholine + N-(acetyl)-sphing-4-enine = 1-(5Z,8Z,11Z,14Z)-eicosatetraenoyl-N-(acetyl)-sphing-4-enine + 1-octadecanoyl-sn-glycero-3-phosphocholine. The catalysed reaction is 1-(9Z-octadecenoyl)-2-hexadecanoyl-sn-glycero-3-phosphocholine + N-(acetyl)-sphing-4-enine = 1-hexadecanoyl-N-(acetyl)-sphing-4-enine + 1-(9Z-octadecenoyl)-sn-glycero-3-phosphocholine. The enzyme catalyses 1-(9Z)-octadecenoyl-2-octadecanoyl-sn-glycero-3-phosphocholine + N-(acetyl)-sphing-4-enine = 1-octadecanoyl-N-(acetyl)-sphing-4-enine + 1-(9Z-octadecenoyl)-sn-glycero-3-phosphocholine. It catalyses the reaction 1,2-di-(9Z-octadecenoyl)-sn-glycero-3-phosphocholine + N-(acetyl)-sphing-4-enine = 1-(9Z-octadecenoyl)-N-(acetyl)-sphing-4-enine + 1-(9Z-octadecenoyl)-sn-glycero-3-phosphocholine. It carries out the reaction N-(acetyl)-sphing-4-enine + a 1,2-diacyl-sn-glycero-3-phosphocholine = 1-O-acyl-N-(acetyl)-sphing-4-enine + a 2-acyl-sn-glycero-3-phosphocholine. The catalysed reaction is 1-hexadecanoyl-2-(9Z-octadecenoyl)-sn-glycero-3-phosphocholine + N-(acetyl)-sphing-4-enine = 1-hexadecanoyl-N-(acetyl)-sphing-4-enine + 2-(9Z-octadecenoyl)-sn-glycero-3-phosphocholine. The enzyme catalyses 1-hexadecanoyl-2-(9Z,12Z-octadecadienoyl)-sn-glycero-3-phosphocholine + N-(acetyl)-sphing-4-enine = 2-(9Z,12Z-octadecadienoyl)-sn-glycero-3-phosphocholine + 1-hexadecanoyl-N-(acetyl)-sphing-4-enine. It catalyses the reaction 1-hexadecanoyl-2-(5Z,8Z,11Z,14Z-eicosatetraenoyl)-sn-glycero-3-phosphocholine + N-(acetyl)-sphing-4-enine = 1-hexadecanoyl-N-(acetyl)-sphing-4-enine + 2-(5Z,8Z,11Z,14Z)-eicosatetraenoyl-sn-glycero-3-phosphocholine. It carries out the reaction 1-hexadecanoyl-2-(4Z,7Z,10Z,13Z,16Z,19Z-docosahexaenoyl)-sn-glycero-3-phosphocholine + N-(acetyl)-sphing-4-enine = 2-(4Z,7Z,10Z,13Z,16Z,19Z-docosahexaenoyl)-sn-glycero-3-phosphocholine + 1-hexadecanoyl-N-(acetyl)-sphing-4-enine. The catalysed reaction is 1-hexadecanoyl-2-nonadioyl-sn-glycero-3-phosphocholine + N-(acetyl)-sphing-4-enine = 2-nonadioyl-sn-glycero-3-phosphocholine + 1-hexadecanoyl-N-(acetyl)-sphing-4-enine. The enzyme catalyses 1-octadecanoyl-2-(9Z-octadecenoyl)-sn-glycero-3-phosphocholine + N-(acetyl)-sphing-4-enine = 1-octadecanoyl-N-(acetyl)-sphing-4-enine + 2-(9Z-octadecenoyl)-sn-glycero-3-phosphocholine. It catalyses the reaction 1-octadecanoyl-2-(5Z,8Z,11Z,14Z-eicosatetraenoyl)-sn-glycero-3-phosphocholine + N-(acetyl)-sphing-4-enine = 1-octadecanoyl-N-(acetyl)-sphing-4-enine + 2-(5Z,8Z,11Z,14Z)-eicosatetraenoyl-sn-glycero-3-phosphocholine. It carries out the reaction 1-(9Z-octadecenoyl)-2-hexadecanoyl-sn-glycero-3-phosphocholine + N-(acetyl)-sphing-4-enine = 1-(9Z-octadecenoyl)-N-(acetyl)-sphing-4-enine + 2-hexadecanoyl-sn-glycero-3-phosphocholine. The catalysed reaction is 1-(9Z)-octadecenoyl-2-octadecanoyl-sn-glycero-3-phosphocholine + N-(acetyl)-sphing-4-enine = 2-octadecanoyl-sn-glycero-3-phosphocholine + 1-(9Z-octadecenoyl)-N-(acetyl)-sphing-4-enine. The enzyme catalyses a 1,2-diacyl-sn-glycero-3-phospho-L-serine + N-(acetyl)-sphing-4-enine = a 2-acyl-sn-glycero-3-phospho-L-serine + 1-O-acyl-N-(acetyl)-sphing-4-enine. It catalyses the reaction 1-octadecanoyl-2-(9Z-octadecenoyl)-sn-glycero-3-phospho-L-serine + N-(acetyl)-sphing-4-enine = 2-(9Z-octadecenoyl)-sn-glycero-3-phospho-L-serine + 1-octadecanoyl-N-(acetyl)-sphing-4-enine. It carries out the reaction a 1,2-diacyl-sn-glycero-3-phospho-L-serine + N-(acetyl)-sphing-4-enine = 1-O-acyl-N-(acetyl)-sphing-4-enine + a 1-acyl-sn-glycero-3-phospho-L-serine. The catalysed reaction is 1-octadecanoyl-2-(9Z-octadecenoyl)-sn-glycero-3-phospho-L-serine + N-(acetyl)-sphing-4-enine = 1-octadecanoyl-sn-glycero-3-phosphoserine + 1-(9Z-octadecenoyl)-N-(acetyl)-sphing-4-enine. The enzyme catalyses a 1,2-diacyl-sn-glycero-3-phospho-(1'-sn-glycerol) + N-(acetyl)-sphing-4-enine = 2-acyl-sn-glycero-3-phospho-(1'-sn-glycerol) + 1-O-acyl-N-(acetyl)-sphing-4-enine. It catalyses the reaction 1-octadecanoyl-2-(9Z-octadecenoyl)-sn-glycero-3-phospho-(1'-sn-glycerol) + N-(acetyl)-sphing-4-enine = 2-(9Z-octadecenoyl)-sn-glycero-3-phospho-(1'-sn-glycerol) + 1-octadecanoyl-N-(acetyl)-sphing-4-enine. It carries out the reaction a 1,2-diacyl-sn-glycero-3-phospho-(1'-sn-glycerol) + N-(acetyl)-sphing-4-enine = 1-O-acyl-N-(acetyl)-sphing-4-enine + 1-acyl-sn-glycero-3-phospho-(1'-sn-glycerol). The catalysed reaction is 1-octadecanoyl-2-(9Z-octadecenoyl)-sn-glycero-3-phospho-(1'-sn-glycerol) + N-(acetyl)-sphing-4-enine = 1-octadecanoyl-sn-glycero-3-phospho-(1'-sn-glycerol) + 1-(9Z-octadecenoyl)-N-(acetyl)-sphing-4-enine. The enzyme catalyses an N-acylethanolamine + a 1,2-diacyl-sn-glycero-3-phosphocholine = 2-(acylamino)ethyl fatty acid + a 2-acyl-sn-glycero-3-phosphocholine. It catalyses the reaction an N-acylethanolamine + a 1,2-diacyl-sn-glycero-3-phosphocholine = 2-(acylamino)ethyl fatty acid + a 1-acyl-sn-glycero-3-phosphocholine. It carries out the reaction N-(5Z,8Z,11Z,14Z-eicosatetraenoyl)-ethanolamine + 1,2-di-(9Z-octadecenoyl)-sn-glycero-3-phosphocholine = 2-[(5Z,8Z,11Z,14Z)-eicosatetraenoylamino]ethyl (9Z)-octadecenoate + (9Z-octadecenoyl)-sn-glycero-3-phosphocholine. The catalysed reaction is N-(9Z-octadecenoyl) ethanolamine + 1,2-di-(9Z-octadecenoyl)-sn-glycero-3-phosphocholine = 2-[(9Z)-octadecenoylamino]ethyl (9Z)-octadecenoate + (9Z-octadecenoyl)-sn-glycero-3-phosphocholine. The enzyme catalyses a 3-acyl-sn-glycerol + a 1,2-diacyl-sn-glycero-3-phosphocholine = a 1,3-diacylglycerol + a 1-acyl-sn-glycero-3-phosphocholine. It catalyses the reaction a 3-acyl-sn-glycerol + a 1,2-diacyl-sn-glycero-3-phosphocholine = a 1,3-diacylglycerol + a 2-acyl-sn-glycero-3-phosphocholine. It carries out the reaction 3-(9Z-octadecenoyl)-sn-glycerol + 1,2-di-(9Z-octadecenoyl)-sn-glycero-3-phosphocholine = 1,3-di-(9Z-octadecenoyl)-glycerol + (9Z-octadecenoyl)-sn-glycero-3-phosphocholine. The catalysed reaction is 3-hexadecanoyl-sn-glycerol + 1,2-di-(9Z-octadecenoyl)-sn-glycero-3-phosphocholine = 1-(9Z)-octadecenoyl-3-hexadecanoyl-sn-glycerol + (9Z-octadecenoyl)-sn-glycero-3-phosphocholine. The enzyme catalyses a 1-acyl-sn-glycerol + a 1,2-diacyl-sn-glycero-3-phosphocholine = a 1,3-diacylglycerol + a 2-acyl-sn-glycero-3-phosphocholine. It catalyses the reaction a 1-acyl-sn-glycerol + a 1,2-diacyl-sn-glycero-3-phosphocholine = a 1,3-diacylglycerol + a 1-acyl-sn-glycero-3-phosphocholine. It carries out the reaction 1-(9Z-octadecenoyl)-sn-glycerol + 1,2-di-(9Z-octadecenoyl)-sn-glycero-3-phosphocholine = 1,3-di-(9Z-octadecenoyl)-glycerol + (9Z-octadecenoyl)-sn-glycero-3-phosphocholine. The catalysed reaction is 1-hexadecanoyl-sn-glycerol + 1,2-di-(9Z-octadecenoyl)-sn-glycero-3-phosphocholine = 1-hexadecanoyl-3-(9Z)-octadecenoyl-sn-glycerol + (9Z-octadecenoyl)-sn-glycero-3-phosphocholine. The enzyme catalyses a 2-acylglycerol + a 1,2-diacyl-sn-glycero-3-phosphocholine = a 1,2-diacylglycerol + a 2-acyl-sn-glycero-3-phosphocholine. It catalyses the reaction a 2-acylglycerol + a 1,2-diacyl-sn-glycero-3-phosphocholine = a 1,2-diacylglycerol + a 1-acyl-sn-glycero-3-phosphocholine. It carries out the reaction 2-hexadecanoylglycerol + 1,2-di-(9Z-octadecenoyl)-sn-glycero-3-phosphocholine = 1-(9Z)-octadecenoyl-2-hexadecanoylglycerol + (9Z-octadecenoyl)-sn-glycero-3-phosphocholine. The catalysed reaction is 1-O-alkylglycerol + a 1,2-diacyl-sn-glycero-3-phosphocholine = 1-O-alkyl-3-acylglycerol + a 1-acyl-sn-glycero-3-phosphocholine. The enzyme catalyses 1-O-alkylglycerol + a 1,2-diacyl-sn-glycero-3-phosphocholine = 1-O-alkyl-3-acylglycerol + a 2-acyl-sn-glycero-3-phosphocholine. It catalyses the reaction 1-O-hexadecylglycerol + 1,2-di-(9Z-octadecenoyl)-sn-glycero-3-phosphocholine = 1-O-hexadecyl-3-(9Z)-octadecenoylglycerol + (9Z-octadecenoyl)-sn-glycero-3-phosphocholine. It carries out the reaction 1-O-alkyl-2-acyl-sn-glycerol + a 1,2-diacyl-sn-glycero-3-phosphocholine = 1-O-alkyl-2,3-diacyl-sn-glycerol + a 2-acyl-sn-glycero-3-phosphocholine. The catalysed reaction is 1-O-alkyl-2-acyl-sn-glycerol + a 1,2-diacyl-sn-glycero-3-phosphocholine = 1-O-alkyl-2,3-diacyl-sn-glycerol + a 1-acyl-sn-glycero-3-phosphocholine. The enzyme catalyses 1-O-hexadecyl-2-acetyl-sn-glycerol + 1,2-di-(9Z-octadecenoyl)-sn-glycero-3-phosphocholine = 1-O-hexadecyl-2-acetyl-3-(9Z)-octadecenoyl-sn-glycerol + (9Z-octadecenoyl)-sn-glycero-3-phosphocholine. It catalyses the reaction 1-O-hexadecyl-2-O-methyl-sn-glycerol + 1,2-di-(9Z-octadecenoyl)-sn-glycero-3-phosphocholine = 1-O-hexadecyl-2-O-methyl-3-(9Z)-octadecenoyl-sn-glycerol + (9Z-octadecenoyl)-sn-glycero-3-phosphocholine. It carries out the reaction a 1,2-diacyl-sn-glycero-3-phosphoethanolamine + H2O = a 1-acyl-sn-glycero-3-phosphoethanolamine + a fatty acid + H(+). The catalysed reaction is 1-acyl-2-(5Z,8Z,11Z,14Z)-eicosatetraenoyl-sn-glycero-3-phosphoethanolamine + H2O = a 1-acyl-sn-glycero-3-phosphoethanolamine + (5Z,8Z,11Z,14Z)-eicosatetraenoate + H(+). The enzyme catalyses a 1,2-diacyl-sn-glycero-3-phospho-(1'-sn-glycerol) + H2O = 1-acyl-sn-glycero-3-phospho-(1'-sn-glycerol) + a fatty acid + H(+). It catalyses the reaction 1-hexadecanoyl-2-(9Z-octadecenoyl)-sn-glycero-3-phospho-(1'-sn-glycerol) + H2O = 1-hexadecanoyl-sn-glycero-3-phospho-(1'-sn-glycerol) + (9Z)-octadecenoate + H(+). It carries out the reaction a 1,2-diacyl-sn-glycero-3-phospho-(1'-sn-glycerol) + H2O = 2-acyl-sn-glycero-3-phospho-(1'-sn-glycerol) + a fatty acid + H(+). The catalysed reaction is 1-hexadecanoyl-2-(9Z-octadecenoyl)-sn-glycero-3-phospho-(1'-sn-glycerol) + H2O = 2-(9Z-octadecenoyl)-sn-glycero-3-phospho-(1'-sn-glycerol) + hexadecanoate + H(+). With respect to regulation, inhibited by zinc ions at neutral pH. Zinc ions in plasma may keep the enzyme from hydrolyzing inappropriate substrates. Functionally, has dual calcium-independent phospholipase and O-acyltransferase activities with a potential role in glycerophospholipid homeostasis and remodeling of acyl groups of lipophilic alcohols present in acidic cellular compartments. Catalyzes hydrolysis of the ester bond of the fatty acyl group attached at sn-1 or sn-2 position of phospholipids (phospholipase A1 or A2 activity) and transfer it to the hydroxyl group at the first carbon of lipophilic alcohols (O-acyltransferase activity). Among preferred fatty acyl donors are phosphatidylcholines, phosphatidylethanolamines, phosphatidylglycerols and phosphatidylserines. Favors sn-2 over sn-1 deacylation of unsaturated fatty acyl groups of phosphatidylcholines, phosphatidylethanolamines, and phosphatidylglycerols. Among preferred fatty acyl acceptors are natural lipophilic alcohols including short-chain ceramide N-acetyl-sphingosine (C2 ceramide), alkylacylglycerols, monoacylglycerols, and acylethanolamides such as anandamide and oleoylethanolamide. Selectively hydrolyzes the sn-1 fatty acyl group of truncated oxidized phospholipids and may play a role in detoxification of reactive oxidized phospholipids during oxidative stress. Required for normal phospholipid degradation in alveolar macrophages with potential implications in the clearance of pulmonary surfactant, which is mainly composed of dipalmitoylphosphatidylcholine (1,2-dihexadecanoyl-sn-glycero-3-phosphocholine). Involved in the first step of bis(monoacylglycero)phosphate (BMP) de novo synthesis from phosphatidylglycerol (1,2-diacyl-sn-glycero-3-phospho-(1'-sn-glycerol), PG). BMP is an important player in cargo sorting and degradation, regulation of cellular cholesterol levels and intercellular communication. At neutral pH, hydrolyzes the sn-1 fatty acyl group of the lysophosphatidylcholines. This is Lysosomal phospholipase A and acyltransferase from Homo sapiens (Human).